Consider the following 191-residue polypeptide: 3-hydroxyanthranilate 3,4-dioxygenase 2 (191 aa).

Arg48 is a binding site for O2. Fe cation-binding residues include His52, Glu73, and His111. Glu73 is a substrate binding site. Arg115 and Glu125 together coordinate substrate.

Belongs to the 3-HAO family. It depends on Fe(2+) as a cofactor.

It localises to the cytoplasm. The enzyme catalyses 3-hydroxyanthranilate + O2 = (2Z,4Z)-2-amino-3-carboxymuconate 6-semialdehyde. It functions in the pathway cofactor biosynthesis; NAD(+) biosynthesis; quinolinate from L-kynurenine: step 3/3. Functionally, catalyzes the oxidative ring opening of 3-hydroxyanthranilate to 2-amino-3-carboxymuconate semialdehyde, which spontaneously cyclizes to quinolinate. The polypeptide is 3-hydroxyanthranilate 3,4-dioxygenase 2 (bna1-2) (Aspergillus clavatus (strain ATCC 1007 / CBS 513.65 / DSM 816 / NCTC 3887 / NRRL 1 / QM 1276 / 107)).